Reading from the N-terminus, the 1069-residue chain is Regulator of nonsense transcripts 1 (1069 aa).

Residues 1 to 86 (MDDSDDEYSR…SEKSLTEEQH (86 aa)) are disordered. The segment covering 28–50 (IGNTQDSQFAYEQFSVPTQSSQA) has biased composition (polar residues). Residues 51-65 (TDLLPGGTDGTTNDL) are compositionally biased toward low complexity. Positions 77 to 86 (SEKSLTEEQH) are enriched in basic and acidic residues. The 158-residue stretch at 87–244 (EQKLPEHACR…VRMEELWRDH (158 aa)) folds into the Upf1 CH-rich domain. Zn(2+) contacts are provided by Cys-95, Cys-98, Cys-109, Cys-112, Cys-117, His-127, His-131, His-137, Cys-155, Cys-158, Cys-181, and Cys-185. The tract at residues 95-127 (CRYCGISDPLCVAKCTVCRKWFCNSNDGTSGGH) is C3H. The CC/SHH/C stretch occupies residues 109 to 137 (CTVCRKWFCNSNDGTSGGHIVHHMVRSQH). Residues 155–185 (CYRCGSKNVFNLGFIPGKKDQVVVIICRTPC) are C4. ATP is bound by residues Gln-450, 467–474 (GPPGTGKT), Gln-639, Tyr-676, and Glu-807. The interval 966–1069 (ARNQKDRRRG…MDDLLFSQDC (104 aa)) is disordered. The span at 991-1013 (SQGMMSQQSQQYPPQGASSQSQY) shows a compositional bias: low complexity.

Belongs to the DNA2/NAM7 helicase family. Phosphorylated probably by smg-1. Smg-3 and smg-4 are required for phosphorylation.

The protein localises to the cytoplasm. It catalyses the reaction ATP + H2O = ADP + phosphate + H(+). RNA-dependent helicase required for nonsense-mediated decay (NMD) of aberrant mRNAs containing premature stop codons and modulates the expression level of normal mRNAs. Is recruited to mRNAs upon translation termination and undergoes a cycle of phosphorylation and dephosphorylation; its phosphorylation appears to be a key step in NMD. The formation of an smg-2-3-4 surveillance complex is believed to activate NMD. The protein is Regulator of nonsense transcripts 1 (smg-2) of Caenorhabditis elegans.